A 215-amino-acid chain; its full sequence is Adenylate kinase (215 aa).

10 to 15 (GAGKGT) is a binding site for ATP. Residues 30-59 (STGDMLRAAVKAETELGLKAKSVMDSGGLV) form an NMP region. Residues Thr31, Arg36, 57-59 (GLV), 85-88 (GFPR), and Gln92 each bind AMP. The segment at 122-159 (GRRVHEGSGRIYHTIFNPPKVEGIDDVTGEPLLQRKDD) is LID. ATP-binding positions include Arg123 and 132–133 (IY). The AMP site is built by Arg156 and Arg167. Gly201 provides a ligand contact to ATP.

This sequence belongs to the adenylate kinase family. In terms of assembly, monomer.

It localises to the cytoplasm. The catalysed reaction is AMP + ATP = 2 ADP. It functions in the pathway purine metabolism; AMP biosynthesis via salvage pathway; AMP from ADP: step 1/1. In terms of biological role, catalyzes the reversible transfer of the terminal phosphate group between ATP and AMP. Plays an important role in cellular energy homeostasis and in adenine nucleotide metabolism. In Pseudomonas syringae pv. syringae (strain B728a), this protein is Adenylate kinase.